Consider the following 343-residue polypeptide: Type II restriction enzyme BsuMI component YdiS (343 aa).

In terms of assembly, bsuMI restriction activity requires YdiR, YdiS and YdjA.

The catalysed reaction is Endonucleolytic cleavage of DNA to give specific double-stranded fragments with terminal 5'-phosphates.. In terms of biological role, a P subtype restriction enzyme that recognizes the double-stranded sequence 5'-CTCGAG-3'; the cleavage site is unknown. The chain is Type II restriction enzyme BsuMI component YdiS (ydiS) from Bacillus subtilis (strain 168).